Reading from the N-terminus, the 445-residue chain is Pre-B-cell leukemia transcription factor 2 (445 aa).

Residues 13-44 are disordered; that stretch reads VGIPGLPIHGGPQTLTPHPMHEPPTDNGEPRK. The segment covering 31–44 has biased composition (basic and acidic residues); it reads PMHEPPTDNGEPRK. In terms of domain architecture, PBC spans 42-236; it reads PRKQDIGDIL…VMILRSRFLD (195 aa). The tract at residues 49–128 is PBC-A; it reads DILQQIMTIT…EGVAGPEKGG (80 aa). Residues 131-236 are PBC-B; the sequence is AAAAAAAAAS…VMILRSRFLD (106 aa). Positions 237-299 form a DNA-binding region, homeobox; TALE-type; sequence ARRKRRNFSK…NKRIRYKKNI (63 aa). Residues 319-332 show a composition bias toward polar residues; that stretch reads QGGHSGANSPTTPT. The tract at residues 319-338 is disordered; that stretch reads QGGHSGANSPTTPTSAGSGG.

The protein belongs to the TALE/PBX homeobox family.

It is found in the nucleus. In terms of biological role, transcriptional activator that binds the sequence 5'-ATCAATCAA-3'. This Xenopus laevis (African clawed frog) protein is Pre-B-cell leukemia transcription factor 2 (pbx2).